An 86-amino-acid chain; its full sequence is Thioredoxin (86 aa).

Active-site nucleophile residues include C15 and C18. C15 and C18 are oxidised to a cystine.

The protein belongs to the glutaredoxin family.

Does not function as a glutathione-disulfide oxidoreductase in the presence of glutathione and glutathione reductase. Has low thioredoxin activity in vitro. In Methanocaldococcus jannaschii (strain ATCC 43067 / DSM 2661 / JAL-1 / JCM 10045 / NBRC 100440) (Methanococcus jannaschii), this protein is Thioredoxin.